A 773-amino-acid polypeptide reads, in one-letter code: FT-interacting protein 3 (773 aa).

The segment covering 1 to 16 has biased composition (basic and acidic residues); that stretch reads MQRPPPEDFSLKETRP. Residues 1-24 form a disordered region; sequence MQRPPPEDFSLKETRPHLGGGKLS. C2 domains are found at residues 22 to 142, 181 to 305, and 345 to 471; these read KLSG…PQWY, VSGT…SRWY, and YSSD…THSY. Residues Asp-55, Asp-61, Asp-108, Asp-110, and Asp-115 each contribute to the Ca(2+) site. The next 3 helical transmembrane spans lie at 574–594, 608–628, and 716–736; these read IMGVLSGLIAVGKWFEQICNW, IILVLYPELILPTIFLYLFLI, and LFVLFCLIAAVILYVTPFQVV.

It belongs to the MCTP family. As to quaternary structure, interacts with and regulates subcellular localization and trafficking of STM. Requires Ca(2+) as cofactor. In terms of tissue distribution, accumulates in vascular tissues, leaf primordia and flowers. Highly expressed in roots meristems and in both vegetative and inflorescence shoot apical meristems (SAMs).

The protein resides in the endoplasmic reticulum membrane. Its subcellular location is the cytoplasm. It is found in the vesicle. The protein localises to the cell membrane. It localises to the endosome membrane. The protein resides in the golgi apparatus membrane. Required for proliferation and differentiation of shoot stem cells in the shoot apical meristem (SAM), thus determining the appropriate balance between the maintenance of shoot stem cells and their differentiation into other aboveground plant parts via the control of subcellular localization and intercellular trafficking of STM in the shoot apex. Prevents intracellular trafficking of STM to the plasma membrane in cells in the peripheral shoot meristem region thus facilitating STM recycling to the nucleus to maintain stem cells. May function as a signaling molecule by regulating the trafficking of other regulators. The chain is FT-interacting protein 3 from Arabidopsis thaliana (Mouse-ear cress).